The sequence spans 150 residues: Snaclec 7 (150 aa).

A signal peptide spans 1-23 (MGRFISISFGLLVVFLSLSGTGA). Disulfide bonds link Cys27/Cys38, Cys55/Cys144, and Cys121/Cys136. Residues 34-145 (YEGYCYKVFN…CNDPRYFVCK (112 aa)) enclose the C-type lectin domain.

It belongs to the snaclec family. As to quaternary structure, heterodimer; disulfide-linked.

The protein resides in the secreted. Its function is as follows. Interferes with one step of hemostasis (modulation of platelet aggregation, or coagulation cascade, for example). The polypeptide is Snaclec 7 (Daboia siamensis (Eastern Russel's viper)).